The primary structure comprises 256 residues: Beta-fibrinogenase-like (256 aa).

Residues 1-18 (MVLIKVLANLLVLQLSYA) form the signal peptide. The propeptide occupies 19 to 24 (QKSSEL). The 223-residue stretch at 25–247 (VVGGDECNIN…YTDWIQSIIA (223 aa)) folds into the Peptidase S1 domain. Intrachain disulfides connect Cys31–Cys161, Cys49–Cys65, Cys96–Cys254, Cys140–Cys208, Cys172–Cys187, and Cys198–Cys223. Asn44 is a glycosylation site (N-linked (GlcNAc...) asparagine). The active-site Charge relay system is the His64. N-linked (GlcNAc...) asparagine glycans are attached at residues Asn78 and Asn101. The Charge relay system role is filled by Asp108. Asn152 is a glycosylation site (N-linked (GlcNAc...) asparagine). Residue Ser202 is the Charge relay system of the active site.

It belongs to the peptidase S1 family. Snake venom subfamily. Monomer. As to expression, expressed by the venom gland.

It is found in the secreted. In terms of biological role, snake venom serine protease that has fibrinogenolytic activities by hydrolyzing the beta chain of fibrinogen (FGB). Typical arginine esterase which hydrolyzes esters and amides of arginine. The polypeptide is Beta-fibrinogenase-like (Daboia siamensis (Eastern Russel's viper)).